Here is a 287-residue protein sequence, read N- to C-terminus: MTMPYYASPEQLMRDKSEYARKGISRGRSVAVVTYADGVLFIAENPSSTLHKVGELYDRIGFAAVGRYSEFESLRVAGVRLADVRGYSYNRRDVTGRVIANAYAQTLGEVFTQQMKPFEVELCVAEVGETPETDQLYRLTFDGSVVDEPDFVVMGGQAEAVSANLREHFLPGMGLAEALRVGVQALSAVSPATSAGNGGPALLTAEQLEVAVLDRRRPKRAFRRIAGAALRPLLDRQEEDGVVAGEEPHTAAHAPSVPQPGAPAGLGDPGAPDTGGTAGSGGEAPTT.

Residues 241–287 are disordered; sequence GVVAGEEPHTAAHAPSVPQPGAPAGLGDPGAPDTGGTAGSGGEAPTT. Over residues 262–275 the composition is skewed to low complexity; that stretch reads APAGLGDPGAPDTG. Over residues 276–287 the composition is skewed to gly residues; that stretch reads GTAGSGGEAPTT.

This sequence belongs to the peptidase T1A family. The 20S proteasome core is composed of 14 alpha and 14 beta subunits that assemble into four stacked heptameric rings, resulting in a barrel-shaped structure. The two inner rings, each composed of seven catalytic beta subunits, are sandwiched by two outer rings, each composed of seven alpha subunits. The catalytic chamber with the active sites is on the inside of the barrel. Has a gated structure, the ends of the cylinder being occluded by the N-termini of the alpha-subunits. Is capped by the proteasome-associated ATPase, ARC.

The protein resides in the cytoplasm. Its pathway is protein degradation; proteasomal Pup-dependent pathway. Its activity is regulated as follows. The formation of the proteasomal ATPase ARC-20S proteasome complex, likely via the docking of the C-termini of ARC into the intersubunit pockets in the alpha-rings, may trigger opening of the gate for substrate entry. Interconversion between the open-gate and close-gate conformations leads to a dynamic regulation of the 20S proteasome proteolysis activity. In terms of biological role, component of the proteasome core, a large protease complex with broad specificity involved in protein degradation. This chain is Proteasome subunit alpha, found in Geodermatophilus obscurus (strain ATCC 25078 / DSM 43160 / JCM 3152 / CCUG 61914 / KCC A-0152 / KCTC 9177 / NBRC 13315 / NRRL B-3577 / G-20).